Reading from the N-terminus, the 211-residue chain is Large ribosomal subunit protein eL13 (211 aa).

Belongs to the eukaryotic ribosomal protein eL13 family. In terms of assembly, component of the 60S large ribosomal subunit (LSU).

The protein localises to the cytoplasm. Component of the ribosome, a large ribonucleoprotein complex responsible for the synthesis of proteins in the cell. The small ribosomal subunit (SSU) binds messenger RNAs (mRNAs) and translates the encoded message by selecting cognate aminoacyl-transfer RNA (tRNA) molecules. The large subunit (LSU) contains the ribosomal catalytic site termed the peptidyl transferase center (PTC), which catalyzes the formation of peptide bonds, thereby polymerizing the amino acids delivered by tRNAs into a polypeptide chain. The nascent polypeptides leave the ribosome through a tunnel in the LSU and interact with protein factors that function in enzymatic processing, targeting, and the membrane insertion of nascent chains at the exit of the ribosomal tunnel. As part of the LSU, it is probably required for its formation and the maturation of rRNAs. This chain is Large ribosomal subunit protein eL13 (rpl13), found in Ictalurus punctatus (Channel catfish).